The following is a 299-amino-acid chain: Transcription elongation factor A protein 2 (299 aa).

Residues 6 to 83 enclose the TFIIS N-terminal domain; sequence EEIARIARRL…KSWKKLLDAS (78 aa). Lysine 58 is covalently cross-linked (Glycyl lysine isopeptide (Lys-Gly) (interchain with G-Cter in ubiquitin)). Serine 60 and serine 100 each carry phosphoserine. The segment at 86-128 is disordered; that stretch reads KARERGRGMPLPTSSRDASEAPDPSRKRPELPRAPSTPRITTF. Positions 102 to 116 are enriched in basic and acidic residues; it reads DASEAPDPSRKRPEL. Positions 138 to 254 constitute a TFIIS central domain; that stretch reads VRNKCREMLT…EHQMARTGGT (117 aa). The TFIIS-type zinc finger occupies 257-297; sequence DLFTCGKCRKKNCTYTQVQTRSSDEPMTTFVVCNECGNRWK. 4 residues coordinate Zn(2+): cysteine 261, cysteine 264, cysteine 289, and cysteine 292.

This sequence belongs to the TFS-II family. Interacts with the basal transcription factor GTF2B. Interacts with REXO1. In terms of tissue distribution, testis and ovary specific.

It is found in the nucleus. Its function is as follows. Necessary for efficient RNA polymerase II transcription elongation past template-encoded arresting sites. The arresting sites in DNA have the property of trapping a certain fraction of elongating RNA polymerases that pass through, resulting in locked ternary complexes. Cleavage of the nascent transcript by S-II allows the resumption of elongation from the new 3'-terminus. This Homo sapiens (Human) protein is Transcription elongation factor A protein 2 (TCEA2).